Here is a 247-residue protein sequence, read N- to C-terminus: Carboxy-S-adenosyl-L-methionine synthase (247 aa).

Residues Tyr40, 65–67 (GCS), 90–91 (DN), 122–123 (DI), Asn137, and Arg204 each bind S-adenosyl-L-methionine.

The protein belongs to the class I-like SAM-binding methyltransferase superfamily. Cx-SAM synthase family. Homodimer.

It catalyses the reaction prephenate + S-adenosyl-L-methionine = carboxy-S-adenosyl-L-methionine + 3-phenylpyruvate + H2O. Functionally, catalyzes the conversion of S-adenosyl-L-methionine (SAM) to carboxy-S-adenosyl-L-methionine (Cx-SAM). This Stutzerimonas stutzeri (strain A1501) (Pseudomonas stutzeri) protein is Carboxy-S-adenosyl-L-methionine synthase.